The chain runs to 562 residues: Potassium-transporting ATPase potassium-binding subunit (562 aa).

The next 10 membrane-spanning stretches (helical) occupy residues 5 to 25 (AFLLIFGLLLTVLIVAQPLGS), 63 to 83 (AAAILALNLIGIVVLFVLLMA), 132 to 152 (GLTVQNFLSAASGIAVAFALI), 175 to 195 (LYVLLPLSLLLALFFVSQGVL), 250 to 270 (LSNIVQMLAILLIPTALCFAF), 279 to 299 (QGHALLWAMALIFIVAAAVVM), 379 to 399 (GLYGMLLFVLLTVFIAGLMIG), 416 to 436 (MTALAILIPPALVLLGTALAL), 483 to 503 (VLLAVAMLLGRFAVMVPVLAI), and 526 to 546 (LFIGMLIAIVLLIGALTFIPA).

Belongs to the KdpA family. As to quaternary structure, the system is composed of three essential subunits: KdpA, KdpB and KdpC.

It localises to the cell inner membrane. Functionally, part of the high-affinity ATP-driven potassium transport (or Kdp) system, which catalyzes the hydrolysis of ATP coupled with the electrogenic transport of potassium into the cytoplasm. This subunit binds the periplasmic potassium ions and delivers the ions to the membrane domain of KdpB through an intramembrane tunnel. The sequence is that of Potassium-transporting ATPase potassium-binding subunit from Pectobacterium atrosepticum (strain SCRI 1043 / ATCC BAA-672) (Erwinia carotovora subsp. atroseptica).